The chain runs to 190 residues: B3 domain-containing protein At1g49475 (190 aa).

Positions 1–27 are disordered; it reads MRNMHTNRRSPGPITSAATQRRLKPEP. The segment at residues 33–125 is a DNA-binding region (TF-B3); the sequence is KFIKIILLSR…CFRVVIFDVS (93 aa).

The protein localises to the nucleus. The sequence is that of B3 domain-containing protein At1g49475 from Arabidopsis thaliana (Mouse-ear cress).